Here is a 302-residue protein sequence, read N- to C-terminus: MEPGPDGPAAPGPAAIREGWFRETCSLWPGQALSLQVEQLLHHRRSRYQDILVFRSKTYGNVLVLDGVIQCTERDEFSYQEMIANLPLCSHPNPRKVLIIGGGDGGVLREVVKHPSVESVVQCEIDEDVIEVSKKFLPGMAVGFSSSKLTLHVGDGFEFMKQNQDAFDVIITDSSDPMGPAESLFKESYYQLMKTALKEDGILCCQGECQWLHLDLIKEMRHFCKSLFPVVDYAYCSIPTYPSGQIGFMLCSKNPSTNFREPVQQLTQAQVEQMQLKYYNSDMHRAAFVLPEFTRKALNDIS.

Methionine 1 bears the N-acetylmethionine mark. Positions 18–253 constitute a PABS domain; it reads EGWFRETCSL…GQIGFMLCSK (236 aa). Glutamine 49 serves as a coordination point for S-adenosyl 3-(methylsulfanyl)propylamine. Tyrosine 79 lines the putrescine pocket. Residues glutamine 80, aspartate 104, glutamate 124, 155–156, and aspartate 173 contribute to the S-adenosyl 3-(methylsulfanyl)propylamine site; that span reads DG. The Proton acceptor role is filled by aspartate 173. Residues 173 to 176 and tyrosine 241 contribute to the putrescine site; that span reads DSSD.

Belongs to the spermidine/spermine synthase family. In terms of assembly, homodimer or homotetramer.

The catalysed reaction is S-adenosyl 3-(methylsulfanyl)propylamine + putrescine = S-methyl-5'-thioadenosine + spermidine + H(+). Its pathway is amine and polyamine biosynthesis; spermidine biosynthesis; spermidine from putrescine: step 1/1. With respect to regulation, the activity is thought to be regulated mainly by the availability of decarboxylated S-adenosylmethionine. Functionally, catalyzes the production of spermidine from putrescine and decarboxylated S-adenosylmethionine (dcSAM). Has a strong preference for putrescine as substrate, and has very low activity towards 1,3-diaminopropane. Has extremely low activity towards spermidine. The chain is Spermidine synthase (Srm) from Mus musculus (Mouse).